Consider the following 364-residue polypeptide: Spermidine/putrescine import ATP-binding protein PotA (364 aa).

The ABC transporter domain occupies 6–236; the sequence is IEIRQIYKSY…PANLHVAMFI (231 aa). 38–45 contributes to the ATP binding site; it reads GPSGCGKT.

This sequence belongs to the ABC transporter superfamily. Spermidine/putrescine importer (TC 3.A.1.11.1) family. The complex is composed of two ATP-binding proteins (PotA), two transmembrane proteins (PotB and PotC) and a solute-binding protein (PotD).

The protein localises to the cell inner membrane. The catalysed reaction is ATP + H2O + polyamine-[polyamine-binding protein]Side 1 = ADP + phosphate + polyamineSide 2 + [polyamine-binding protein]Side 1.. Part of the ABC transporter complex PotABCD involved in spermidine/putrescine import. Responsible for energy coupling to the transport system. The protein is Spermidine/putrescine import ATP-binding protein PotA of Legionella pneumophila (strain Paris).